The sequence spans 287 residues: ATP synthase gamma chain (287 aa).

It belongs to the ATPase gamma chain family. F-type ATPases have 2 components, CF(1) - the catalytic core - and CF(0) - the membrane proton channel. CF(1) has five subunits: alpha(3), beta(3), gamma(1), delta(1), epsilon(1). CF(0) has three main subunits: a, b and c.

The protein localises to the cell inner membrane. Its function is as follows. Produces ATP from ADP in the presence of a proton gradient across the membrane. The gamma chain is believed to be important in regulating ATPase activity and the flow of protons through the CF(0) complex. This chain is ATP synthase gamma chain, found in Tolumonas auensis (strain DSM 9187 / NBRC 110442 / TA 4).